We begin with the raw amino-acid sequence, 495 residues long: Putative myristoylated membrane protein 458R (495 aa).

Glycine 2 is lipidated: N-myristoyl glycine; by host. Asparagine 58, asparagine 71, asparagine 72, asparagine 103, and asparagine 111 each carry an N-linked (GlcNAc...) asparagine; by host glycan. Positions 150–182 (HLKEIHKIITKEVENAKNNNKDVTKLIEQFSQA) form a coiled coil. 2 helical membrane passes run 194-214 (ILSL…YVGG) and 216-236 (IAFP…FNWT). N-linked (GlcNAc...) asparagine; by host glycans are attached at residues asparagine 262, asparagine 314, asparagine 317, asparagine 349, and asparagine 457. A helical membrane pass occupies residues 469 to 489 (LWLLCVAVILLFIGIIGMGLG).

The protein belongs to the IIV-6 118L/458R family.

It is found in the membrane. The protein is Putative myristoylated membrane protein 458R of Acheta domesticus (House cricket).